The chain runs to 692 residues: Elongation factor G 2 (692 aa).

In terms of domain architecture, tr-type G spans 8–283 (KDVRNIGIMA…GVVNYLPSPL (276 aa)). Residues 17-24 (AHIDAGKT), 81-85 (DTPGH), and 135-138 (NKMD) each bind GTP.

Belongs to the TRAFAC class translation factor GTPase superfamily. Classic translation factor GTPase family. EF-G/EF-2 subfamily.

Its subcellular location is the cytoplasm. Functionally, catalyzes the GTP-dependent ribosomal translocation step during translation elongation. During this step, the ribosome changes from the pre-translocational (PRE) to the post-translocational (POST) state as the newly formed A-site-bound peptidyl-tRNA and P-site-bound deacylated tRNA move to the P and E sites, respectively. Catalyzes the coordinated movement of the two tRNA molecules, the mRNA and conformational changes in the ribosome. The protein is Elongation factor G 2 of Desulfotalea psychrophila (strain LSv54 / DSM 12343).